The chain runs to 181 residues: Extracellular superoxide dismutase [Cu-Zn] (181 aa).

The signal sequence occupies residues 1–18 (MMQYLVVSLALCATICSA). N-linked (GlcNAc...) asparagine glycosylation occurs at Asn-46. 3 residues coordinate Cu cation: His-75, His-77, and His-92. An intrachain disulfide couples Cys-86 to Cys-175. Zn(2+) is bound by residues His-92, His-100, His-109, and Asp-112. An N-linked (GlcNAc...) asparagine glycan is attached at Asn-119. His-149 provides a ligand contact to Cu cation. A glycan (N-linked (GlcNAc...) asparagine) is linked at Asn-159.

Belongs to the Cu-Zn superoxide dismutase family. Cu cation serves as cofactor. It depends on Zn(2+) as a cofactor. As to expression, expressed at higher levels in females compared to males.

The protein resides in the secreted. The catalysed reaction is 2 superoxide + 2 H(+) = H2O2 + O2. Protects the extracellular space from the toxic effects of reactive oxygen intermediates by converting superoxide radicals into hydrogen peroxide and oxygen. The chain is Extracellular superoxide dismutase [Cu-Zn] from Drosophila melanogaster (Fruit fly).